The following is a 429-amino-acid chain: MALRVTRNTKLNTENKAKVSMTGAKRVPVAIAAASKPGLRPRTALGDIGNKVSEQAQARVPLKKELKTSVTGKVSAKIPPPKPQEKVPVSEPEVELAEPEPEPEPVMEEKLSPEPILVDNPSPSPMETSGCAPAEEYLCQAFSDVILAVSDVDADDGADPNLCSEYVKDIYAYLRQLEEEQSVRPRYLLGREVTGNMRAILIDWLIQVQMKFRLLQETMYMTVSIIDRFMQDNCVPKKMLQLVGVTAMFIASKYEEMYPPEIGDFAFVTNNTYTKHQIRQMEMKILRVLNFSLGRPLPLHFLRRASKIGEVDVEQHTLAKYLMELTMLDYDMVHFAPSQIAAGAFCLALKILDNGEWTPTLQHYLSYTEESLLPVMQHLAKNVVMVNRGLTKHMTIKNKYATSKHAKISTLAQLNCTLVQNLSKAVSKA.

A compositionally biased stretch (polar residues) spans 1–14 (MALRVTRNTKLNTE). Disordered regions lie at residues 1-21 (MALR…KVSM) and 71-128 (TGKV…PMET). Residue Lys73 is modified to N6-acetyllysine. Residues 92-106 (PEVELAEPEPEPEPV) are compositionally biased toward acidic residues. Ser122 bears the Phosphoserine; by CDK1 mark. At Ser124 the chain carries Phosphoserine. A Phosphoserine; by PLK1 modification is found at Ser129. Residue Ser143 is modified to Phosphoserine. Interaction with CDK2 stretches follow at residues 165–173 (EYVKDIYAY) and 254–257 (YEEM). Thr317 carries the phosphothreonine modification.

This sequence belongs to the cyclin family. Cyclin AB subfamily. As to quaternary structure, interacts with the CDC2 protein kinase to form a serine/threonine kinase holoenzyme complex also known as maturation promoting factor (MPF). The cyclin subunit imparts substrate specificity to the complex. Binds HEI10. Interacts with catalytically active RALBP1 and CDC2 during mitosis to form an endocytotic complex during interphase. Interacts with CCNF; interaction is required for nuclear localization. Interacts with CDK5RAP3. Interacts with RFPL4A and UBE2A. Interacts with INCA1. Post-translationally, ubiquitinated by the SCF(NIPA) complex during interphase, leading to its destruction. Not ubiquitinated during G2/M phases. In terms of processing, phosphorylated by PLK1 at Ser-129 on centrosomes during prophase: phosphorylation by PLK1 does not cause nuclear import. Phosphorylation at Ser-143 was also reported to be mediated by PLK1 but Ser-129 seems to be the primary phosphorylation site.

It is found in the cytoplasm. It localises to the nucleus. The protein resides in the cytoskeleton. Its subcellular location is the microtubule organizing center. The protein localises to the centrosome. Functionally, essential for the control of the cell cycle at the G2/M (mitosis) transition. This is G2/mitotic-specific cyclin-B1 (CCNB1) from Cricetulus griseus (Chinese hamster).